A 723-amino-acid polypeptide reads, in one-letter code: Transcription factor E2F7 (723 aa).

The tract at residues 121 to 146 is disordered; the sequence is AEEEEEEELDDSCQYEALDESERRPS. The segment covering 122–139 has biased composition (acidic residues); the sequence is EEEEEEELDDSCQYEALD. 2 consecutive DNA-binding regions follow at residues 147–216 and 264–349; these read RKQK…VWHG and RKDK…KWIG. Composition is skewed to polar residues over residues 356–370 and 395–405; these read SSNSDDLRGQISNSG and LISSAPSTPHR. Disordered stretches follow at residues 356-379, 395-417, 489-546, 650-689, and 702-723; these read SSNSDDLRGQISNSGTERREKMAR, LISSAPSTPHRYSTDEPVDYSRK, SLRK…ASFG, EHHGNVPATTSSPRAEESPKPAQTQTPVTPKEASLGSKSF, and QSAARKRGSAQRRLDIGHTAAN. Residues 494–503 show a composition bias toward basic and acidic residues; sequence ERSEEDDHQT. A compositionally biased stretch (low complexity) spans 520 to 535; that stretch reads SESLSSSTRRSPVCSP.

This sequence belongs to the E2F/DP family. Homodimer and heterodimer: mainly forms homodimers and, to a lesser extent, heterodimers with e2f8.

It is found in the nucleus. Its function is as follows. Atypical E2F transcription factor that participates in various processes such as angiogenesis and polyploidization of specialized cells. Mainly acts as a transcription repressor that binds DNA independently of DP proteins and specifically recognizes the E2 recognition site 5'-TTTC[CG]CGC-3'. Directly represses transcription of classical E2F transcription factors such as e2f1. Acts as a regulator of S-phase by recognizing and binding the E2-related site 5'-TTCCCGCC-3' and mediating repression of G1/S-regulated genes. Acts as a promoter of sprouting angiogenesis, possibly by acting as a transcription activator and promoting expression of vegfa. The sequence is that of Transcription factor E2F7 (e2f7) from Danio rerio (Zebrafish).